The following is a 1486-amino-acid chain: Chromosome partition protein MukB (1486 aa).

Position 34–41 (34–41) interacts with ATP; sequence GGNGAGKS. Coiled coils occupy residues 326–418, 444–480, and 509–603; these read LEAD…QYNQ, LETF…QAYQ, and RHLA…RAPV. The flexible hinge stretch occupies residues 666–783; sequence PGGSEDQRLN…EVPLFGRAAR (118 aa). 3 coiled-coil regions span residues 835 to 923, 977 to 1115, and 1209 to 1266; these read EAEI…AKLE, EMLS…TAKA, and VEAI…QNVS.

It belongs to the SMC family. MukB subfamily. As to quaternary structure, homodimerization via its hinge domain. Binds to DNA via its C-terminal region. Interacts, and probably forms a ternary complex, with MukE and MukF via its C-terminal region. The complex formation is stimulated by calcium or magnesium. Interacts with tubulin-related protein FtsZ.

The protein resides in the cytoplasm. Its subcellular location is the nucleoid. Its function is as follows. Plays a central role in chromosome condensation, segregation and cell cycle progression. Functions as a homodimer, which is essential for chromosome partition. Involved in negative DNA supercoiling in vivo, and by this means organize and compact chromosomes. May achieve or facilitate chromosome segregation by condensation DNA from both sides of a centrally located replisome during cell division. The chain is Chromosome partition protein MukB from Shigella flexneri serotype 5b (strain 8401).